Here is a 290-residue protein sequence, read N- to C-terminus: ATP synthase gamma chain (290 aa).

The protein belongs to the ATPase gamma chain family. F-type ATPases have 2 components, CF(1) - the catalytic core - and CF(0) - the membrane proton channel. CF(1) has five subunits: alpha(3), beta(3), gamma(1), delta(1), epsilon(1). CF(0) has three main subunits: a, b and c.

The protein localises to the cell inner membrane. Functionally, produces ATP from ADP in the presence of a proton gradient across the membrane. The gamma chain is believed to be important in regulating ATPase activity and the flow of protons through the CF(0) complex. The chain is ATP synthase gamma chain from Paracoccus denitrificans (strain Pd 1222).